We begin with the raw amino-acid sequence, 548 residues long: MHIPHFHLHKGPKGVRTISYEQLLSEDDSYASEKLSEDHVTEVHFVTDKDEDSNASGESRGSMELLENCFSLLHAQDDTSKFVSLTMLAKLLNDHPNLIFKCWERMDMKFLDRLLLSTHYEYVDLGVSILLAFCSEEAILRSYEVKKRVSTLLQCCLKHYDLCIPVICTLSSNPKSAKYLLYYTSFIINEFPFEQAFEILSNALYALDNVQTYMRPIFQGIDKRRGWKLDCTFSFFSDLFSRFPVQSWYSEAIRANLQPLMDAVVERFITDKNLSSATVILSNLLKAAGPASIMPNDGFMILVIGRCSAEIRGSLGMLVKAVGQKGKHGTVSYTVCECYEVLGLLIRYLCENCDVLAQRIEPDKFFQLQRSLTELFSDTMDFLRDAWDNNKNRDNLASHVTVISAVATLCLWLTEDDSQYAQASGLMDIFVYLWRHSWSNGIDYAKWISVALPSMLSNKVFFKAFKDFDAWKVVYDDFIKCNDDLKGDKSFNDYILSTNEEDGEDERLAQAIQDFHILIQLNSLVPQSIWNDDIWQEPYWKNLLESNF.

Phosphoserine occurs at positions 19 and 25. Thr47 carries the post-translational modification Phosphothreonine.

This is an uncharacterized protein from Schizosaccharomyces pombe (strain 972 / ATCC 24843) (Fission yeast).